We begin with the raw amino-acid sequence, 454 residues long: Serine/threonine-protein kinase NLK2 (454 aa).

The Protein kinase domain maps to Pro67 to Leu356. ATP-binding positions include Ile73 to Val81 and Lys96. Asp193 serves as the catalytic Proton acceptor.

This sequence belongs to the protein kinase superfamily. CMGC Ser/Thr protein kinase family. MAP kinase subfamily. In terms of assembly, interacts with sox11, hmgxb4/hmg2l1, rnf138/narf, stat3.1 and mef2a. Mg(2+) serves as cofactor.

The protein resides in the nucleus. It localises to the cytoplasm. It catalyses the reaction L-seryl-[protein] + ATP = O-phospho-L-seryl-[protein] + ADP + H(+). The enzyme catalyses L-threonyl-[protein] + ATP = O-phospho-L-threonyl-[protein] + ADP + H(+). With respect to regulation, activated by tyrosine and threonine phosphorylation. Negatively regulates Wnt/beta-catenin-signaling during development. Plays a role together with sox11 in neural induction during early embryogenesis. Involved in TGFbeta-mediated mesoderm induction in early embryos, acting downstream of map3k7/tak1 to phosphorylate stat3. Augments the rnf138/narf-directed ubiquitination and degradation of tcf/lef by enhancing the association of rnf138/narf and tcf/lef. Phosphorylates mef2a to play a role in anterior neural development, including eye formation. In Xenopus tropicalis (Western clawed frog), this protein is Serine/threonine-protein kinase NLK2 (nlk.2).